The primary structure comprises 1161 residues: Nuclear pore complex-interacting protein family member B11 (1161 aa).

A helical transmembrane segment spans residues 63–87 (IIIAFPTSYKVVITLWIVYLWVSLL). Disordered regions lie at residues 278–580 (ADDN…DDNI) and 892–1161 (SADD…RRLS). Over residues 311 to 321 (PLPPSAPPSAP) the composition is skewed to pro residues. Composition is skewed to basic and acidic residues over residues 368–378 (DNIKTTAERLR), 410–420 (DNIKTPAEHLR), 452–462 (DNIKTPAERLR), 494–504 (DNIKTPAEHLR), 536–546 (DNIKTTAEHLR), 918–928 (DNIKTPAERLR), 960–970 (DNIKTPAERLR), 1002–1012 (DNIKTPAERLR), and 1044–1054 (DNIKTPAERLR).

The protein belongs to the NPIP family.

The protein localises to the membrane. The sequence is that of Nuclear pore complex-interacting protein family member B11 (NPIPB11) from Homo sapiens (Human).